The following is a 48-amino-acid chain: Large ribosomal subunit protein bL34c (48 aa).

The protein belongs to the bacterial ribosomal protein bL34 family.

It localises to the plastid. Its subcellular location is the chloroplast. The chain is Large ribosomal subunit protein bL34c from Thalassiosira pseudonana (Marine diatom).